The following is a 38-amino-acid chain: Photosystem I reaction center subunit VIII (38 aa).

A helical membrane pass occupies residues 12–32; that stretch reads WILIPIIGWLMPAVVMGLLFL.

Belongs to the PsaI family.

The protein resides in the cellular thylakoid membrane. In terms of biological role, may help in the organization of the PsaL subunit. The chain is Photosystem I reaction center subunit VIII from Gloeothece citriformis (strain PCC 7424) (Cyanothece sp. (strain PCC 7424)).